We begin with the raw amino-acid sequence, 298 residues long: Type II methyltransferase M.MjaIV (298 aa).

It carries out the reaction a 2'-deoxyadenosine in DNA + S-adenosyl-L-methionine = an N(6)-methyl-2'-deoxyadenosine in DNA + S-adenosyl-L-homocysteine + H(+). A methylase that recognizes the double-stranded sequence 5'-GTNNAC-3', methylates A-5 on both strands, and protects the DNA from cleavage by the MjaIV endonuclease. In Methanocaldococcus jannaschii (strain ATCC 43067 / DSM 2661 / JAL-1 / JCM 10045 / NBRC 100440) (Methanococcus jannaschii), this protein is Type II methyltransferase M.MjaIV (mjaIVMP).